A 600-amino-acid chain; its full sequence is Transcription factor rlmA (600 aa).

The MADS-box domain maps to Met1–Asp61. Disordered stretches follow at residues Tyr71 to Thr518 and Gly544 to Thr600. The segment covering Pro75–Asp89 has biased composition (basic and acidic residues). Positions Pro151–Ser160 are enriched in polar residues. Positions Gln222–His242 are enriched in pro residues. Over residues Gln243–Pro260 the composition is skewed to low complexity. Over residues His328–Ile339 the composition is skewed to polar residues. The segment covering Pro364–Lys384 has biased composition (basic and acidic residues). Residues Pro386–Arg397 show a composition bias toward pro residues. Over residues Arg440–Gly452 the composition is skewed to low complexity. Positions Asn453 to Ser468 are enriched in polar residues. Residues Pro490–Gly501 are compositionally biased toward pro residues. A compositionally biased stretch (low complexity) spans Ala503–Asn515.

Belongs to the MEF2 family. Interacts with hsp90. Phosphorylation during asexual development.

Its subcellular location is the nucleus. Functionally, transcription factor; part of cell wall integrity (CWI) signaling pathway composed of pkcA, the bck1-mkk2-mpka MAPK cascade and the downstream rlmA transcription regulator. The CWI signaling pathway regulates cell wall integrity and pyomelanin formation. CWI also controls oxidative stress response, gliotoxin production, iron adaptation and asexual development. Finally, CWI is constitutively required for A.fumigatus to cope with the temperature increase found in the mammalian lung environment, during infection. Positively regulates the phosphorylation of mpkA. Involved in tolerance to oxidative damage and transcriptional regulation of genes related to oxidative stress adaptation. Directly regulates the expression of regulators of conidiation, including flbB, flbC, brlA, abaA, and rasB, as well as genes involved in cell wall synthesis and remodeling. Specifically associates with the target fumiquinazoline (fmq) cluster genes promoters at conserved motifs (5'-TAWWWWTA-3') during conidiation to supplement mature conidia with fumiquinazoline C. Also controls the DHN-melanin production via binding the promoter of pksP. The polypeptide is Transcription factor rlmA (Aspergillus fumigatus (strain ATCC MYA-4609 / CBS 101355 / FGSC A1100 / Af293) (Neosartorya fumigata)).